The chain runs to 365 residues: Probable flavin mononucleotide-dependent alkene reductase (365 aa).

Residues 30-32 (PLT), Ala63, and Gln105 each bind FMN. The active-site Proton donor is the Tyr191. FMN-binding positions include Arg238, Ser303, and 324–325 (GT).

The protein belongs to the NADH:flavin oxidoreductase/NADH oxidase family. Monomer. FMN is required as a cofactor.

Its subcellular location is the cytoplasm. The protein localises to the cytosol. Functionally, may function as a flavin mononucleotide (FMN)-dependent alkene reductase on substrates carrying alpha,beta-unsaturated carbonyl groups (ketones, aldehydes, carboxylic acids, esters, lactones or cyclic imides). The catalysis depends on NAD(P)H, which acts as a hydride donor for the reduction. Seems to be involved in metabolic pathways required for efficient replication of amastigotes within macrophages. In terms of biological role, acts as a FMN-dependent nitroreductase that activates anti-leishmanial bicyclic nitroaromatic prodrugs including delamanid, DNDI-VL-2098 and (R)-PA-824, forming toxic products that kill the parasites. The polypeptide is Probable flavin mononucleotide-dependent alkene reductase (Leishmania infantum).